Here is a 192-residue protein sequence, read N- to C-terminus: Probable metallophosphoesterase MJ0623 (192 aa).

Residues D41, H43, D70, N92, H115, H144, and H146 each contribute to the a divalent metal cation site.

This sequence belongs to the metallophosphoesterase superfamily. YfcE family. It depends on a divalent metal cation as a cofactor.

This Methanocaldococcus jannaschii (strain ATCC 43067 / DSM 2661 / JAL-1 / JCM 10045 / NBRC 100440) (Methanococcus jannaschii) protein is Probable metallophosphoesterase MJ0623.